The sequence spans 229 residues: Ribonuclease 3 (229 aa).

An RNase III domain is found at Phe2–Gly130. Glu43 provides a ligand contact to Mg(2+). The active site involves Asp47. Mg(2+) is bound by residues Asp116 and Glu119. The active site involves Glu119. Residues Asp157–Gly226 form the DRBM domain.

The protein belongs to the ribonuclease III family. As to quaternary structure, homodimer. The cofactor is Mg(2+).

It is found in the cytoplasm. It catalyses the reaction Endonucleolytic cleavage to 5'-phosphomonoester.. Functionally, digests double-stranded RNA. Involved in the processing of primary rRNA transcript to yield the immediate precursors to the large and small rRNAs (23S and 16S). Processes some mRNAs, and tRNAs when they are encoded in the rRNA operon. Processes pre-crRNA and tracrRNA of type II CRISPR loci if present in the organism. The chain is Ribonuclease 3 from Oleidesulfovibrio alaskensis (strain ATCC BAA-1058 / DSM 17464 / G20) (Desulfovibrio alaskensis).